A 224-amino-acid chain; its full sequence is PKHD-type hydroxylase SO_3913 (224 aa).

A Fe2OG dioxygenase domain is found at 78–176 (QFYPPLFNRY…RTSAFMWLQS (99 aa)). Residues histidine 96, aspartate 98, and histidine 157 each coordinate Fe cation. Arginine 167 is a binding site for 2-oxoglutarate.

Requires Fe(2+) as cofactor. L-ascorbate is required as a cofactor.

In Shewanella oneidensis (strain ATCC 700550 / JCM 31522 / CIP 106686 / LMG 19005 / NCIMB 14063 / MR-1), this protein is PKHD-type hydroxylase SO_3913.